Reading from the N-terminus, the 226-residue chain is PKHD-type hydroxylase Pfl01_0799 (226 aa).

One can recognise a Fe2OG dioxygenase domain in the interval 78–178 (KVFPPLLNCY…RYASFFWTQS (101 aa)). His96, Asp98, and His159 together coordinate Fe cation. Arg169 lines the 2-oxoglutarate pocket.

Fe(2+) is required as a cofactor. L-ascorbate serves as cofactor.

The chain is PKHD-type hydroxylase Pfl01_0799 from Pseudomonas fluorescens (strain Pf0-1).